Consider the following 186-residue polypeptide: TATA-box-binding protein D (186 aa).

2 consecutive repeat copies span residues 10 to 86 (IENV…VEDL) and 101 to 179 (VQNI…HERL).

Belongs to the TBP family.

Functionally, general factor that plays a role in the activation of archaeal genes transcribed by RNA polymerase. Binds specifically to the TATA box promoter element which lies close to the position of transcription initiation. The polypeptide is TATA-box-binding protein D (tbpD) (Halobacterium salinarum (strain ATCC 700922 / JCM 11081 / NRC-1) (Halobacterium halobium)).